The chain runs to 207 residues: 3-isopropylmalate dehydratase small subunit (207 aa).

It belongs to the LeuD family. LeuD type 1 subfamily. As to quaternary structure, heterodimer of LeuC and LeuD.

The enzyme catalyses (2R,3S)-3-isopropylmalate = (2S)-2-isopropylmalate. The protein operates within amino-acid biosynthesis; L-leucine biosynthesis; L-leucine from 3-methyl-2-oxobutanoate: step 2/4. Its function is as follows. Catalyzes the isomerization between 2-isopropylmalate and 3-isopropylmalate, via the formation of 2-isopropylmaleate. This Acidithiobacillus ferrooxidans (strain ATCC 23270 / DSM 14882 / CIP 104768 / NCIMB 8455) (Ferrobacillus ferrooxidans (strain ATCC 23270)) protein is 3-isopropylmalate dehydratase small subunit.